Reading from the N-terminus, the 354-residue chain is MAIDENKQKALAAALGQIEKQFGKGSIMRLGEDRSMDVETISTGSLSLDIALGAGGLPMGRIVEIYGPESSGKTTLTLQVIAAAQREGKTCAFIDAEHALDPIYAKKLGVDIDNLLCSQPDTGEQALEICDALTRSGAVDVIIVDSVAALTPKAEIEGEIGDSHMGLAARMMSQAMRKLAGNLKNANTLLIFINQIRMKIGVMFGNPETTTGGNALKFYASVRLDIRRIGAIKEGDEVVGSETRVKVVKNKIAAPFKQAEFQIMYGEGINSRGELVDLGVKHKMIEKAGAWYSYNGEKIGQGKANACNFLKENPAIAAELDKKLRDLLLHSGGELVAASGDDFEDDEAETSEQF.

67–74 (GPESSGKT) lines the ATP pocket.

This sequence belongs to the RecA family.

It localises to the cytoplasm. Functionally, can catalyze the hydrolysis of ATP in the presence of single-stranded DNA, the ATP-dependent uptake of single-stranded DNA by duplex DNA, and the ATP-dependent hybridization of homologous single-stranded DNAs. It interacts with LexA causing its activation and leading to its autocatalytic cleavage. This chain is Protein RecA, found in Serratia marcescens.